The primary structure comprises 347 residues: Holliday junction branch migration complex subunit RuvB (347 aa).

The large ATPase domain (RuvB-L) stretch occupies residues 13–195 (NEDAVTSGEV…FGIVEHMQYY (183 aa)). ATP is bound by residues Leu34, Arg35, Gly76, Lys79, Thr80, Thr81, 142-144 (EDY), Arg185, Tyr195, and Arg232. Residue Thr80 coordinates Mg(2+). Residues 196 to 266 (TIDELEKIVQ…TTEGALKQLQ (71 aa)) are small ATPAse domain (RuvB-S). Residues 269-347 (DEGLDQTDRR…QLGLPVPGDK (79 aa)) form a head domain (RuvB-H) region. Arg329 provides a ligand contact to DNA.

This sequence belongs to the RuvB family. In terms of assembly, homohexamer. Forms an RuvA(8)-RuvB(12)-Holliday junction (HJ) complex. HJ DNA is sandwiched between 2 RuvA tetramers; dsDNA enters through RuvA and exits via RuvB. An RuvB hexamer assembles on each DNA strand where it exits the tetramer. Each RuvB hexamer is contacted by two RuvA subunits (via domain III) on 2 adjacent RuvB subunits; this complex drives branch migration. In the full resolvosome a probable DNA-RuvA(4)-RuvB(12)-RuvC(2) complex forms which resolves the HJ.

It localises to the cytoplasm. It carries out the reaction ATP + H2O = ADP + phosphate + H(+). Functionally, the RuvA-RuvB-RuvC complex processes Holliday junction (HJ) DNA during genetic recombination and DNA repair, while the RuvA-RuvB complex plays an important role in the rescue of blocked DNA replication forks via replication fork reversal (RFR). RuvA specifically binds to HJ cruciform DNA, conferring on it an open structure. The RuvB hexamer acts as an ATP-dependent pump, pulling dsDNA into and through the RuvAB complex. RuvB forms 2 homohexamers on either side of HJ DNA bound by 1 or 2 RuvA tetramers; 4 subunits per hexamer contact DNA at a time. Coordinated motions by a converter formed by DNA-disengaged RuvB subunits stimulates ATP hydrolysis and nucleotide exchange. Immobilization of the converter enables RuvB to convert the ATP-contained energy into a lever motion, pulling 2 nucleotides of DNA out of the RuvA tetramer per ATP hydrolyzed, thus driving DNA branch migration. The RuvB motors rotate together with the DNA substrate, which together with the progressing nucleotide cycle form the mechanistic basis for DNA recombination by continuous HJ branch migration. Branch migration allows RuvC to scan DNA until it finds its consensus sequence, where it cleaves and resolves cruciform DNA. The chain is Holliday junction branch migration complex subunit RuvB from Lactobacillus helveticus (strain DPC 4571).